Reading from the N-terminus, the 599-residue chain is Proline--tRNA ligase (599 aa).

The protein belongs to the class-II aminoacyl-tRNA synthetase family. ProS type 1 subfamily. In terms of assembly, homodimer.

Its subcellular location is the cytoplasm. It carries out the reaction tRNA(Pro) + L-proline + ATP = L-prolyl-tRNA(Pro) + AMP + diphosphate. Catalyzes the attachment of proline to tRNA(Pro) in a two-step reaction: proline is first activated by ATP to form Pro-AMP and then transferred to the acceptor end of tRNA(Pro). As ProRS can inadvertently accommodate and process non-cognate amino acids such as alanine and cysteine, to avoid such errors it has two additional distinct editing activities against alanine. One activity is designated as 'pretransfer' editing and involves the tRNA(Pro)-independent hydrolysis of activated Ala-AMP. The other activity is designated 'posttransfer' editing and involves deacylation of mischarged Ala-tRNA(Pro). The misacylated Cys-tRNA(Pro) is not edited by ProRS. The protein is Proline--tRNA ligase of Bifidobacterium animalis subsp. lactis (strain AD011).